The sequence spans 225 residues: pH-response regulator palI/RIM9 homolog 2 (225 aa).

Topologically, residues Met-1–Lys-4 are cytoplasmic. Residues Ile-5–Val-25 form a helical membrane-spanning segment. Topologically, residues Pro-26 to Asn-87 are extracellular. The helical transmembrane segment at Leu-88–Leu-108 threads the bilayer. Over Thr-109–Met-120 the chain is Cytoplasmic. A helical membrane pass occupies residues Leu-121–Ile-141. The Extracellular portion of the chain corresponds to Asp-142–Cys-153. A helical membrane pass occupies residues Thr-154–Met-174. Residues Arg-175–Met-225 lie on the Cytoplasmic side of the membrane.

This sequence belongs to the palI/RIM9 family.

It localises to the cell membrane. Required for the proteolytic cleavage of the transcription factor RIM101 in response to alkaline ambient pH. This Kluyveromyces lactis (strain ATCC 8585 / CBS 2359 / DSM 70799 / NBRC 1267 / NRRL Y-1140 / WM37) (Yeast) protein is pH-response regulator palI/RIM9 homolog 2.